Here is a 388-residue protein sequence, read N- to C-terminus: Xylose isomerase (388 aa).

Active-site residues include His54 and Asp57. The Mg(2+) site is built by Glu181, Glu217, His220, Asp245, Asp255, Asp257, and Asp287.

It belongs to the xylose isomerase family. In terms of assembly, homotetramer. Mg(2+) is required as a cofactor.

The protein localises to the cytoplasm. The enzyme catalyses alpha-D-xylose = alpha-D-xylulofuranose. The chain is Xylose isomerase from Streptomyces avermitilis (strain ATCC 31267 / DSM 46492 / JCM 5070 / NBRC 14893 / NCIMB 12804 / NRRL 8165 / MA-4680).